We begin with the raw amino-acid sequence, 353 residues long: tRNA N(3)-cytidine methyltransferase METTL2 (353 aa).

Residues 1 to 37 (MAAPVVAADSPVIENMPETAGGATENSAEAQKRPQFG) are disordered. S-adenosyl-L-methionine contacts are provided by tryptophan 93, tyrosine 97, glycine 165, aspartate 190, aspartate 216, and isoleucine 237.

Belongs to the methyltransferase superfamily. METL family. Monomer.

It localises to the cytoplasm. The enzyme catalyses cytidine(32) in tRNA(Thr) + S-adenosyl-L-methionine = N(3)-methylcytidine(32) in tRNA(Thr) + S-adenosyl-L-homocysteine + H(+). It catalyses the reaction cytidine(32) in tRNA(Arg)(CCU) + S-adenosyl-L-methionine = N(3)-methylcytidine(32) in tRNA(Arg)(CCU) + S-adenosyl-L-homocysteine + H(+). Its function is as follows. S-adenosyl-L-methionine-dependent methyltransferase that mediates N(3)-methylcytidine modification of residue 32 of the tRNA anticodon loop of tRNA(Thr)(UGU) and tRNA(Arg)(CCU). N(3)-methylcytidine methylation by mettl2a requires the N6-threonylcarbamoylation of tRNA (t6A37) by the EKC/KEOPS complex as prerequisite. This chain is tRNA N(3)-cytidine methyltransferase METTL2 (mettl2a), found in Danio rerio (Zebrafish).